The following is a 991-amino-acid chain: Regulator of telomere elongation helicase 1 homolog (991 aa).

In terms of domain architecture, Helicase ATP-binding spans 7–319; the sequence is NGIPVNFPFE…DDLVLLKEIL (313 aa). 42–49 provides a ligand contact to ATP; it reads SPTGTGKT. The [4Fe-4S] cluster site is built by Cys-148, Cys-166, Cys-175, and Cys-211. The DEAH box signature appears at 254-257; it reads DEAH. Positions 812–833 are disordered; it reads SMKVNPHSRSTKSAGDDAEAGG.

Belongs to the helicase family. RAD3/XPD subfamily.

Its subcellular location is the nucleus. It catalyses the reaction ATP + H2O = ADP + phosphate + H(+). A probable ATP-dependent DNA helicase implicated in DNA repair and the maintenance of genomic stability. Acts as an anti-recombinase to counteract toxic recombination and limit crossover during meiosis. Regulates meiotic recombination and crossover homeostasis by physically dissociating strand invasion events and thereby promotes noncrossover repair by meiotic synthesis dependent strand annealing (SDSA) as well as disassembly of D loop recombination intermediates. This is Regulator of telomere elongation helicase 1 homolog from Anopheles gambiae (African malaria mosquito).